Consider the following 599-residue polypeptide: DNA mismatch repair protein MutL (599 aa).

This sequence belongs to the DNA mismatch repair MutL/HexB family.

This protein is involved in the repair of mismatches in DNA. It is required for dam-dependent methyl-directed DNA mismatch repair. May act as a 'molecular matchmaker', a protein that promotes the formation of a stable complex between two or more DNA-binding proteins in an ATP-dependent manner without itself being part of a final effector complex. The sequence is that of DNA mismatch repair protein MutL from Rhodopseudomonas palustris (strain BisB18).